The primary structure comprises 219 residues: ATP phosphoribosyltransferase (219 aa).

It belongs to the ATP phosphoribosyltransferase family. Short subfamily. Heteromultimer composed of HisG and HisZ subunits.

It is found in the cytoplasm. It carries out the reaction 1-(5-phospho-beta-D-ribosyl)-ATP + diphosphate = 5-phospho-alpha-D-ribose 1-diphosphate + ATP. The protein operates within amino-acid biosynthesis; L-histidine biosynthesis; L-histidine from 5-phospho-alpha-D-ribose 1-diphosphate: step 1/9. In terms of biological role, catalyzes the condensation of ATP and 5-phosphoribose 1-diphosphate to form N'-(5'-phosphoribosyl)-ATP (PR-ATP). Has a crucial role in the pathway because the rate of histidine biosynthesis seems to be controlled primarily by regulation of HisG enzymatic activity. The polypeptide is ATP phosphoribosyltransferase (Syntrophotalea carbinolica (strain DSM 2380 / NBRC 103641 / GraBd1) (Pelobacter carbinolicus)).